Here is a 444-residue protein sequence, read N- to C-terminus: L-cysteine:1D-myo-inositol 2-amino-2-deoxy-alpha-D-glucopyranoside ligase (444 aa).

Residues 1–13 (MPCDRKTSPDQHH) show a composition bias toward basic and acidic residues. The disordered stretch occupies residues 1–21 (MPCDRKTSPDQHHALQIHRHH). Position 75 (cysteine 75) interacts with Zn(2+). Residues 75–78 (CGIT), threonine 90, and 113–115 (NIT) each bind L-cysteinyl-5'-AMP. The 'HIGH' region motif lies at 77–87 (ITPYDATHLGH). Residues 219–224 (ERGGDP) carry the 'ERGGDP' region motif. Position 259 (tryptophan 259) interacts with L-cysteinyl-5'-AMP. Cysteine 263 is a Zn(2+) binding site. 281-283 (GSD) is a binding site for L-cysteinyl-5'-AMP. Residue histidine 288 coordinates Zn(2+). Position 315 (isoleucine 315) interacts with L-cysteinyl-5'-AMP. A 'KMSKS' region motif is present at residues 321 to 325 (KMSKS).

It belongs to the class-I aminoacyl-tRNA synthetase family. MshC subfamily. Monomer. The cofactor is Zn(2+).

It catalyses the reaction 1D-myo-inositol 2-amino-2-deoxy-alpha-D-glucopyranoside + L-cysteine + ATP = 1D-myo-inositol 2-(L-cysteinylamino)-2-deoxy-alpha-D-glucopyranoside + AMP + diphosphate + H(+). Catalyzes the ATP-dependent condensation of GlcN-Ins and L-cysteine to form L-Cys-GlcN-Ins. The polypeptide is L-cysteine:1D-myo-inositol 2-amino-2-deoxy-alpha-D-glucopyranoside ligase (Mycolicibacterium gilvum (strain PYR-GCK) (Mycobacterium gilvum (strain PYR-GCK))).